The chain runs to 380 residues: Lipid-A-disaccharide synthase (380 aa).

Belongs to the LpxB family.

It carries out the reaction a lipid X + a UDP-2-N,3-O-bis[(3R)-3-hydroxyacyl]-alpha-D-glucosamine = a lipid A disaccharide + UDP + H(+). Its pathway is bacterial outer membrane biogenesis; LPS lipid A biosynthesis. Functionally, condensation of UDP-2,3-diacylglucosamine and 2,3-diacylglucosamine-1-phosphate to form lipid A disaccharide, a precursor of lipid A, a phosphorylated glycolipid that anchors the lipopolysaccharide to the outer membrane of the cell. This Francisella philomiragia subsp. philomiragia (strain ATCC 25017 / CCUG 19701 / FSC 153 / O#319-036) protein is Lipid-A-disaccharide synthase.